Here is a 187-residue protein sequence, read N- to C-terminus: UPF0301 protein Clim_0777 (187 aa).

The protein belongs to the UPF0301 (AlgH) family.

This is UPF0301 protein Clim_0777 from Chlorobium limicola (strain DSM 245 / NBRC 103803 / 6330).